Consider the following 484-residue polypeptide: MSPNISLDNTYITLPEEFYTEQLPSKVPSPKLVKWNSTLAKELGLDSDFFQSEEGALVLSGNQILEDTTPIAEAYAGHQFGYFTMLGDGRAVLLGEIVTNDEERYDIQLKGSGRTPYSRGGDGKATLGPMLREYIISEGMKGLGIPSTRSLAVLTTGETILRETALPGAILVRVAKSHIRVGTFQFANQFLDTKELKALADYTIKRHYKEIFTKEDRYRHFLHEVVKNQARLIAQWQLVGFIHGVMNTDNMVISGETIDYGPCAFMDTYHPETVFSSIDTEGRYAYQNQPKMASWDLARLAEALVPLLNDNTEKAIEIAQEEINQFSKLYLTFWYEGMRKKLGLFHENDMDEDLIEALLGLMVKYEADYTNTFRDLTLNQTTQPNLKGSAEYQQWLDLWQDRRKKQEESLEDSIKLMESVNPTVIPRNHRVEEALERAVNYHDYNAMDSLVSVLQHPYDYKNQNDYYATPPGKTACGYRTFCGT.

Positions 87, 89, 90, 110, 122, 123, 173, and 180 each coordinate ATP. Residue Asp-249 is the Proton acceptor of the active site. The Mg(2+) site is built by Asn-250 and Asp-259. Asp-259 contributes to the ATP binding site.

It belongs to the SELO family. The cofactor is Mg(2+). Mn(2+) is required as a cofactor.

The catalysed reaction is L-seryl-[protein] + ATP = 3-O-(5'-adenylyl)-L-seryl-[protein] + diphosphate. The enzyme catalyses L-threonyl-[protein] + ATP = 3-O-(5'-adenylyl)-L-threonyl-[protein] + diphosphate. It catalyses the reaction L-tyrosyl-[protein] + ATP = O-(5'-adenylyl)-L-tyrosyl-[protein] + diphosphate. It carries out the reaction L-histidyl-[protein] + UTP = N(tele)-(5'-uridylyl)-L-histidyl-[protein] + diphosphate. The catalysed reaction is L-seryl-[protein] + UTP = O-(5'-uridylyl)-L-seryl-[protein] + diphosphate. The enzyme catalyses L-tyrosyl-[protein] + UTP = O-(5'-uridylyl)-L-tyrosyl-[protein] + diphosphate. Functionally, nucleotidyltransferase involved in the post-translational modification of proteins. It can catalyze the addition of adenosine monophosphate (AMP) or uridine monophosphate (UMP) to a protein, resulting in modifications known as AMPylation and UMPylation. The protein is Protein nucleotidyltransferase YdiU of Lachnoclostridium phytofermentans (strain ATCC 700394 / DSM 18823 / ISDg) (Clostridium phytofermentans).